We begin with the raw amino-acid sequence, 273 residues long: Phosphate import ATP-binding protein PstB (273 aa).

Residues Ile-19–Ser-258 form the ABC transporter domain. Gly-51–Ser-58 provides a ligand contact to ATP.

This sequence belongs to the ABC transporter superfamily. Phosphate importer (TC 3.A.1.7) family. In terms of assembly, the complex is composed of two ATP-binding proteins (PstB), two transmembrane proteins (PstC and PstA) and a solute-binding protein (PstS).

Its subcellular location is the cell inner membrane. The enzyme catalyses phosphate(out) + ATP + H2O = ADP + 2 phosphate(in) + H(+). Its function is as follows. Part of the ABC transporter complex PstSACB involved in phosphate import. Responsible for energy coupling to the transport system. This is Phosphate import ATP-binding protein PstB from Parasynechococcus marenigrum (strain WH8102).